The chain runs to 1802 residues: Non-reducing polyketide synthase nscA (1802 aa).

Residues 27-261 (DLFRRLDQHS…PLPVYDGLCH (235 aa)) are N-terminal acylcarrier protein transacylase domain (SAT). A Ketosynthase family 3 (KS3) domain is found at 396-829 (SSKLAIVGMA…GGNTTLLLED (434 aa)). Active-site for beta-ketoacyl synthase activity residues include Cys-569, His-704, and His-747. Residues 935 to 1235 (FTGQGAYYHG…SASAIPSCRR (301 aa)) are malonyl-CoA:ACP transacylase (MAT) domain. The product template (PT) domain stretch occupies residues 1322 to 1641 (TSLVHQITAE…RLLMDRFFSP (320 aa)). Residues 1326-1462 (HQITAETVEA…ATIRFEDPEA (137 aa)) form an N-terminal hotdog fold region. The region spanning 1326-1636 (HQITAETVEA…FRRVPRLLMD (311 aa)) is the PKS/mFAS DH domain. His-1358 serves as the catalytic Proton acceptor; for dehydratase activity. The interval 1490 to 1636 (ASRLSKPLAY…FRRVPRLLMD (147 aa)) is C-terminal hotdog fold. The active-site Proton donor; for dehydratase activity is Asp-1547. A disordered region spans residues 1699 to 1729 (LLATSSKSSTPKESPIVTPAESERAEPVDNS). Over residues 1702-1713 (TSSKSSTPKESP) the composition is skewed to low complexity. Residues 1725–1802 (PVDNSMTSQC…EMTAWIEEYC (78 aa)) enclose the Carrier domain. Ser-1762 is modified (O-(pantetheine 4'-phosphoryl)serine).

Pantetheine 4'-phosphate serves as cofactor.

It participates in secondary metabolite biosynthesis. Non-reducing polyketide synthase; part of the gene cluster that mediates the biosynthesis of neosartoricin B, a prenylated anthracenone that probably exhibits T-cell antiproliferative activity, suggestive of a physiological role as an immunosuppressive agent. The non-reducing polyketide synthase nscA probably synthesizes and cyclizes the decaketide backbone. The hydrolase nscB then mediates the product release through hydrolysis followed by spontaneous decarboxylation. The prenyltransferase nscD catalyzes the addition of the dimethylallyl group to the aromatic C5. The FAD-dependent monooxygenase nscC is then responsible for the stereospecific hydroxylation at C2. Neosartoricin B can be converted into two additional compounds neosartoricins C and D. Neosartoricin C is a spirocyclic compound that is cyclized through the attack of C3 hydroxyl on C14, followed by dehydration. On the other hand, neosartoricin D is a further cyclized compound in which attack of C2 on C14 in neosartoricin C results in the formation of the acetal-containing dioxabicyclo-octanone ring. Both of these compounds are novel and possibly represent related metabolites of the gene cluster. This chain is Non-reducing polyketide synthase nscA, found in Trichophyton tonsurans (strain CBS 112818) (Scalp ringworm fungus).